Reading from the N-terminus, the 78-residue chain is HssA/B-like protein 29 (78 aa).

The interval 1 to 31 is disordered; sequence MTLFSSITSISKTNTSSKSSLNSFSGSSLSM.

The protein belongs to the hssA/B family.

This Dictyostelium discoideum (Social amoeba) protein is HssA/B-like protein 29 (hssl29).